A 126-amino-acid polypeptide reads, in one-letter code: Large ribosomal subunit protein uL22 (126 aa).

The protein belongs to the universal ribosomal protein uL22 family. In terms of assembly, part of the 50S ribosomal subunit.

This protein binds specifically to 23S rRNA; its binding is stimulated by other ribosomal proteins, e.g. L4, L17, and L20. It is important during the early stages of 50S assembly. It makes multiple contacts with different domains of the 23S rRNA in the assembled 50S subunit and ribosome. Functionally, the globular domain of the protein is located near the polypeptide exit tunnel on the outside of the subunit, while an extended beta-hairpin is found that lines the wall of the exit tunnel in the center of the 70S ribosome. The protein is Large ribosomal subunit protein uL22 of Phenylobacterium zucineum (strain HLK1).